The primary structure comprises 94 residues: Sec-independent protein translocase protein TatA (94 aa).

Residues 1–21 (MFGRLGAPEIILILVVIILLF) form a helical membrane-spanning segment. Residues 44-94 (AKAMKSEGQESTPAGPPNTDEQPPAQRTIQAAPGDVTSSRPVSEPTDTTKR) form a disordered region. Polar residues predominate over residues 62 to 72 (TDEQPPAQRTI).

The protein belongs to the TatA/E family. The Tat system comprises two distinct complexes: a TatABC complex, containing multiple copies of TatA, TatB and TatC subunits, and a separate TatA complex, containing only TatA subunits. Substrates initially bind to the TatABC complex, which probably triggers association of the separate TatA complex to form the active translocon.

The protein localises to the cell membrane. In terms of biological role, part of the twin-arginine translocation (Tat) system that transports large folded proteins containing a characteristic twin-arginine motif in their signal peptide across membranes. TatA could form the protein-conducting channel of the Tat system. The sequence is that of Sec-independent protein translocase protein TatA from Streptomyces avermitilis (strain ATCC 31267 / DSM 46492 / JCM 5070 / NBRC 14893 / NCIMB 12804 / NRRL 8165 / MA-4680).